A 187-amino-acid chain; its full sequence is Chromophore lyase CpcS/CpeS 2 (187 aa).

The protein belongs to the CpcS/CpeS biliprotein lyase family.

Covalently attaches a chromophore to Cys residue(s) of phycobiliproteins. The protein is Chromophore lyase CpcS/CpeS 2 of Synechococcus sp. (strain JA-3-3Ab) (Cyanobacteria bacterium Yellowstone A-Prime).